The chain runs to 394 residues: Phosphoglycerate kinase (394 aa).

Substrate contacts are provided by residues 21 to 23 (DFN), R36, 59 to 62 (HLGR), R118, and R151. S183 bears the Phosphoserine mark. ATP is bound by residues K201 and G292. T299 carries the phosphothreonine modification. ATP is bound by residues E323 and 350 to 353 (GGDS).

It belongs to the phosphoglycerate kinase family. As to quaternary structure, monomer.

The protein resides in the cytoplasm. It carries out the reaction (2R)-3-phosphoglycerate + ATP = (2R)-3-phospho-glyceroyl phosphate + ADP. Its pathway is carbohydrate degradation; glycolysis; pyruvate from D-glyceraldehyde 3-phosphate: step 2/5. This Bacillus cereus (strain G9842) protein is Phosphoglycerate kinase.